The sequence spans 204 residues: uncharacterized protein (204 aa).

Its function is as follows. Possibly involved in pGI2 replication mechanism. This is an uncharacterized protein from Bacillus thuringiensis.